The sequence spans 185 residues: ATP synthase subunit delta, chloroplastic (185 aa).

This sequence belongs to the ATPase delta chain family. F-type ATPases have 2 components, F(1) - the catalytic core - and F(0) - the membrane proton channel. F(1) has five subunits: alpha(3), beta(3), gamma(1), delta(1), epsilon(1). CF(0) has four main subunits: a(1), b(1), b'(1) and c(10-14). The alpha and beta chains form an alternating ring which encloses part of the gamma chain. F(1) is attached to F(0) by a central stalk formed by the gamma and epsilon chains, while a peripheral stalk is formed by the delta, b and b' chains.

It localises to the plastid. Its subcellular location is the chloroplast thylakoid membrane. Functionally, f(1)F(0) ATP synthase produces ATP from ADP in the presence of a proton or sodium gradient. F-type ATPases consist of two structural domains, F(1) containing the extramembraneous catalytic core and F(0) containing the membrane proton channel, linked together by a central stalk and a peripheral stalk. During catalysis, ATP synthesis in the catalytic domain of F(1) is coupled via a rotary mechanism of the central stalk subunits to proton translocation. Its function is as follows. This protein is part of the stalk that links CF(0) to CF(1). It either transmits conformational changes from CF(0) to CF(1) or is implicated in proton conduction. The chain is ATP synthase subunit delta, chloroplastic from Gracilaria tenuistipitata var. liui (Red alga).